A 1127-amino-acid polypeptide reads, in one-letter code: E3 ubiquitin-protein ligase TRIM33 (1127 aa).

Residues 1-18 are compositionally biased toward gly residues; the sequence is MAENKGGGEAESGGGGSG. The disordered stretch occupies residues 1 to 118; it reads MAENKGGGEA…PSAGPPPGPP (118 aa). The tract at residues 1-147 is necessary for E3 ubiquitin-protein ligase activity and repression of SMAD4 signaling and transcriptional repression; it reads MAENKGGGEA…AEPKLLPCLH (147 aa). The segment covering 19–37 has biased composition (low complexity); the sequence is SAPVTAGAAGPAAQEAEPP. Residues 52-64 are compositionally biased toward gly residues; it reads RAGAEGGAAGPDD. Residues 65 to 97 show a composition bias toward low complexity; it reads GGVAAASSGSAQAASSPAASVGTGVAGGAVSTP. The span at 98-118 shows a compositional bias: pro residues; it reads APAPASAPAPGPSAGPPPGPP. The segment at 125 to 154 adopts an RING-type zinc-finger fold; that stretch reads CAVCQQSLQSRREAEPKLLPCLHSFCLRCL. 2 consecutive B box-type zinc fingers follow at residues 212-259 and 271-312; these read KSEQ…IRKK and QRPV…YQFL. Zn(2+) is bound by residues C217, C220, C241, H245, C276, H279, C299, and H304. Residues 299 to 401 are necessary for oligomerization; it reads CQLLEHKEHR…QMKLLQQQND (103 aa). Residues 299 to 401 are a coiled coil; sequence CQLLEHKEHR…QMKLLQQQND (103 aa). Residues K329, K334, K481, and K504 each participate in a glycyl lysine isopeptide (Lys-Gly) (interchain with G-Cter in SUMO2) cross-link. At R515 the chain carries Asymmetric dimethylarginine; alternate. R515 carries the omega-N-methylarginine; alternate modification. A Glycyl lysine isopeptide (Lys-Gly) (interchain with G-Cter in SUMO2) cross-link involves residue K527. Residue R535 is modified to Omega-N-methylarginine. Residues 536–563 form a disordered region; that stretch reads MQQPPAPVPTTTTTTQQHPRQAAPQMLQ. R577 is subject to Asymmetric dimethylarginine. Residue R591 is modified to Asymmetric dimethylarginine; alternate. An Omega-N-methylarginine; alternate modification is found at R591. R598 and R604 each carry asymmetric dimethylarginine. Disordered stretches follow at residues 608–629, 673–692, and 703–818; these read PQYSMMQPHLQRQHSNPGHAGP, NPENLPSLPDIPPIQLEDAG, and YISG…TPPL. The segment covering 723-759 has biased composition (low complexity); sequence PSALSPGSSGLSNSHTPVRPPSTSSTGSRGSCGSSGR. Residues K763 and K769 each carry the N6-acetyllysine; alternate modification. Glycyl lysine isopeptide (Lys-Gly) (interchain with G-Cter in SUMO2); alternate cross-links involve residues K763 and K769. Residue K774 forms a Glycyl lysine isopeptide (Lys-Gly) (interchain with G-Cter in SUMO2) linkage. Residues K776 and K793 each participate in a glycyl lysine isopeptide (Lys-Gly) (interchain with G-Cter in SUMO2); alternate cross-link. Glycyl lysine isopeptide (Lys-Gly) (interchain with G-Cter in SUMO1); alternate cross-links involve residues K776 and K793. N6-acetyllysine; alternate is present on K793. Basic and acidic residues predominate over residues 793–802; the sequence is KQEKTEDGRR. K796 participates in a covalent cross-link: Glycyl lysine isopeptide (Lys-Gly) (interchain with G-Cter in SUMO2). A Phosphoserine modification is found at S803. Over residues 807 to 818 the composition is skewed to low complexity; the sequence is LSSPESSLTPPL. A Phosphothreonine modification is found at T815. A Glycyl lysine isopeptide (Lys-Gly) (interchain with G-Cter in SUMO2) cross-link involves residue K861. S862 is modified (phosphoserine). A PHD-type zinc finger spans residues 887–934; the sequence is EDWCAVCQNGGDLLCCEKCPKVFHLTCHVPTLLSFPSGDWICTFCRDI. The residue at position 951 (K951) is an N6-acetyllysine. K953 is subject to N6-acetyllysine; alternate. K953 participates in a covalent cross-link: Glycyl lysine isopeptide (Lys-Gly) (interchain with G-Cter in SUMO2); alternate. Residues 957 to 1080 form the Bromo domain; sequence GLSPVDQRKC…LYFEDKLTEI (124 aa). Glycyl lysine isopeptide (Lys-Gly) (interchain with G-Cter in SUMO2) cross-links involve residues K1007 and K1043. T1051 carries the phosphothreonine modification. K1057 participates in a covalent cross-link: Glycyl lysine isopeptide (Lys-Gly) (interchain with G-Cter in SUMO2). Residues 1088–1127 are disordered; that stretch reads PLPEFEQEEDDGEVTEDSDEDFIQPRRKRLKSDERPVHIK. The span at 1092 to 1109 shows a compositional bias: acidic residues; it reads FEQEEDDGEVTEDSDEDF. T1102 carries the phosphothreonine modification. A Phosphoserine modification is found at S1105. K1118 participates in a covalent cross-link: Glycyl lysine isopeptide (Lys-Gly) (interchain with G-Cter in SUMO2). A compositionally biased stretch (basic and acidic residues) spans 1118 to 1127; the sequence is KSDERPVHIK. S1119 carries the post-translational modification Phosphoserine.

This sequence belongs to the TRIM/RBCC family. As to quaternary structure, homooligomer and heterooligomer with TRIM24 and TRIM28 family members. Interacts with SMAD4 in unstimulated cells. Found in a complex with SMAD2 and SMAD3 upon addition of TGF-beta. Interacts with SMAD2 and SMAD3. Interacts with SMAD4 under basal and induced conditions and, upon TGF-beta signaling, with activated SMAD2. Forms a ternary complex with SMAD4 and SMAD2 upon TGF-beta signaling. Post-translationally, sumoylated with SUMO1. Expressed in stem cells at the bottom of the crypts of the colon (at protein level). Expressed in colon adenomas and adenocarcinomas (at protein level). Expressed in brain, lung, liver, spleen, thymus, prostate, kidney, testis, heart, placenta, pancreas, small intestine, ovary, colon, skeletal muscle and hematopoietic progenitors.

The protein localises to the nucleus. It carries out the reaction S-ubiquitinyl-[E2 ubiquitin-conjugating enzyme]-L-cysteine + [acceptor protein]-L-lysine = [E2 ubiquitin-conjugating enzyme]-L-cysteine + N(6)-ubiquitinyl-[acceptor protein]-L-lysine.. It participates in protein modification; protein ubiquitination. Acts as an E3 ubiquitin-protein ligase. Promotes SMAD4 ubiquitination, nuclear exclusion and degradation via the ubiquitin proteasome pathway. According to PubMed:16751102, does not promote a decrease in the level of endogenous SMAD4. May act as a transcriptional repressor. Inhibits the transcriptional response to TGF-beta/BMP signaling cascade. Plays a role in the control of cell proliferation. Its association with SMAD2 and SMAD3 stimulates erythroid differentiation of hematopoietic stem/progenitor. Monoubiquitinates SMAD4 and acts as an inhibitor of SMAD4-dependent TGF-beta/BMP signaling cascade (Monoubiquitination of SMAD4 hampers its ability to form a stable complex with activated SMAD2/3 resulting in inhibition of TGF-beta/BMP signaling cascade). This is E3 ubiquitin-protein ligase TRIM33 (TRIM33) from Homo sapiens (Human).